We begin with the raw amino-acid sequence, 264 residues long: Acyl-[acyl-carrier-protein]--UDP-N-acetylglucosamine O-acyltransferase (264 aa).

Belongs to the transferase hexapeptide repeat family. LpxA subfamily. As to quaternary structure, homotrimer.

The protein resides in the cytoplasm. The catalysed reaction is a (3R)-hydroxyacyl-[ACP] + UDP-N-acetyl-alpha-D-glucosamine = a UDP-3-O-[(3R)-3-hydroxyacyl]-N-acetyl-alpha-D-glucosamine + holo-[ACP]. It participates in glycolipid biosynthesis; lipid IV(A) biosynthesis; lipid IV(A) from (3R)-3-hydroxytetradecanoyl-[acyl-carrier-protein] and UDP-N-acetyl-alpha-D-glucosamine: step 1/6. In terms of biological role, involved in the biosynthesis of lipid A, a phosphorylated glycolipid that anchors the lipopolysaccharide to the outer membrane of the cell. The protein is Acyl-[acyl-carrier-protein]--UDP-N-acetylglucosamine O-acyltransferase of Albidiferax ferrireducens (strain ATCC BAA-621 / DSM 15236 / T118) (Rhodoferax ferrireducens).